A 188-amino-acid chain; its full sequence is Protein SSX5 (188 aa).

The KRAB-related domain occupies 20–83 (KMQKAFDDIA…KRVADFQGND (64 aa)). Positions 78–188 (DFQGNDFDND…EISDPQEDDE (111 aa)) are disordered. The segment covering 112–122 (TPEKPAEEGND) has biased composition (basic and acidic residues). The span at 144–155 (KLNTSEKVNKTS) shows a compositional bias: polar residues. The span at 156–170 (GPKRGKHAWTHRVRE) shows a compositional bias: basic residues. Residues 179–188 (EISDPQEDDE) show a composition bias toward acidic residues.

The protein belongs to the SSX family.

Could act as a modulator of transcription. The protein is Protein SSX5 (SSX5) of Homo sapiens (Human).